The primary structure comprises 422 residues: Ribonuclease Y (422 aa).

The KH domain maps to 112–172; the sequence is TTNIVKLPSD…IRREIATRTL (61 aa). The HD domain occupies 238-331; the sequence is VLAHSIEVAK…VAIADSISAS (94 aa).

It belongs to the RNase Y family.

Its function is as follows. Endoribonuclease that initiates mRNA decay. This is Ribonuclease Y from Mycoplasma mycoides.